The chain runs to 325 residues: Acetyl-coenzyme A carboxylase carboxyl transferase subunit alpha (325 aa).

Residues 35–292 (EIEKLEARLA…DKVLKRSLKQ (258 aa)) form the CoA carboxyltransferase C-terminal domain.

Belongs to the AccA family. In terms of assembly, acetyl-CoA carboxylase is a heterohexamer composed of biotin carboxyl carrier protein (AccB), biotin carboxylase (AccC) and two subunits each of ACCase subunit alpha (AccA) and ACCase subunit beta (AccD).

The protein localises to the cytoplasm. It catalyses the reaction N(6)-carboxybiotinyl-L-lysyl-[protein] + acetyl-CoA = N(6)-biotinyl-L-lysyl-[protein] + malonyl-CoA. Its pathway is lipid metabolism; malonyl-CoA biosynthesis; malonyl-CoA from acetyl-CoA: step 1/1. Functionally, component of the acetyl coenzyme A carboxylase (ACC) complex. First, biotin carboxylase catalyzes the carboxylation of biotin on its carrier protein (BCCP) and then the CO(2) group is transferred by the carboxyltransferase to acetyl-CoA to form malonyl-CoA. This Geobacillus sp. (strain WCH70) protein is Acetyl-coenzyme A carboxylase carboxyl transferase subunit alpha.